The sequence spans 187 residues: Ribosome-recycling factor (187 aa).

Belongs to the RRF family.

It localises to the cytoplasm. Responsible for the release of ribosomes from messenger RNA at the termination of protein biosynthesis. May increase the efficiency of translation by recycling ribosomes from one round of translation to another. This Roseobacter denitrificans (strain ATCC 33942 / OCh 114) (Erythrobacter sp. (strain OCh 114)) protein is Ribosome-recycling factor.